The chain runs to 229 residues: Clathrin light chain (229 aa).

Disordered regions lie at residues 1–24 (MSQF…DSKN) and 76–132 (EMQA…KLRE). Residues 107–132 (EPVRKWKEDQMKRIQERDESSKKLRE) show a composition bias toward basic and acidic residues. Ser229 is modified (phosphoserine).

It belongs to the clathrin light chain family. As to quaternary structure, clathrin coats are formed from molecules containing 3 heavy chains and 3 light chains.

It is found in the cytoplasmic vesicle membrane. Its subcellular location is the membrane. It localises to the coated pit. Clathrin is the major protein of the polyhedral coat of coated pits and vesicles. The chain is Clathrin light chain (clc1) from Schizosaccharomyces pombe (strain 972 / ATCC 24843) (Fission yeast).